Reading from the N-terminus, the 107-residue chain is Phosphoribosyl-ATP pyrophosphatase (107 aa).

This sequence belongs to the PRA-PH family.

The protein localises to the cytoplasm. The catalysed reaction is 1-(5-phospho-beta-D-ribosyl)-ATP + H2O = 1-(5-phospho-beta-D-ribosyl)-5'-AMP + diphosphate + H(+). Its pathway is amino-acid biosynthesis; L-histidine biosynthesis; L-histidine from 5-phospho-alpha-D-ribose 1-diphosphate: step 2/9. The chain is Phosphoribosyl-ATP pyrophosphatase from Bacillus cytotoxicus (strain DSM 22905 / CIP 110041 / 391-98 / NVH 391-98).